Here is a 422-residue protein sequence, read N- to C-terminus: Cytochrome P450-pinF1, plant-inducible (422 aa).

Residue Cys-369 participates in heme binding.

The protein belongs to the cytochrome P450 family. Heme is required as a cofactor.

Not essential for virulence, but may be involved in the detoxification of plant protective agents at the site of wounding. This is Cytochrome P450-pinF1, plant-inducible (cyp103) from Rhizobium radiobacter (Agrobacterium tumefaciens).